Reading from the N-terminus, the 51-residue chain is Light-harvesting protein B800/850/890 beta-2 chain (51 aa).

At 1–17 (ADEMRNVSDEEAKEFHA) the chain is on the cytoplasmic side. A bacteriochlorophyll contacts are provided by H16 and H34. Residues 18 to 40 (MFSQAFTVYVGVAVVAHILAWAW) form a helical membrane-spanning segment. At 41 to 51 (RPWIPGDEGFG) the chain is on the periplasmic side.

Belongs to the antenna complex beta subunit family. The core complex is formed by different alpha and beta chains, binding bacteriochlorophyll molecules, and arranged most probably in tetrameric structures disposed around the reaction center. The non-pigmented gamma chains may constitute additional components.

It is found in the cell inner membrane. Antenna complexes are light-harvesting systems, which transfer the excitation energy to the reaction centers. This Halorhodospira halophila (strain DSM 244 / SL1) (Ectothiorhodospira halophila (strain DSM 244 / SL1)) protein is Light-harvesting protein B800/850/890 beta-2 chain.